A 423-amino-acid polypeptide reads, in one-letter code: Gamma-glutamyl phosphate reductase (423 aa).

Belongs to the gamma-glutamyl phosphate reductase family.

The protein resides in the cytoplasm. The enzyme catalyses L-glutamate 5-semialdehyde + phosphate + NADP(+) = L-glutamyl 5-phosphate + NADPH + H(+). It functions in the pathway amino-acid biosynthesis; L-proline biosynthesis; L-glutamate 5-semialdehyde from L-glutamate: step 2/2. Functionally, catalyzes the NADPH-dependent reduction of L-glutamate 5-phosphate into L-glutamate 5-semialdehyde and phosphate. The product spontaneously undergoes cyclization to form 1-pyrroline-5-carboxylate. The polypeptide is Gamma-glutamyl phosphate reductase (Magnetococcus marinus (strain ATCC BAA-1437 / JCM 17883 / MC-1)).